A 429-amino-acid chain; its full sequence is Probable M18 family aminopeptidase 2 (429 aa).

3 residues coordinate Zn(2+): His82, His156, and His401.

This sequence belongs to the peptidase M18 family. It depends on Zn(2+) as a cofactor.

The sequence is that of Probable M18 family aminopeptidase 2 from Pseudomonas entomophila (strain L48).